Here is a 444-residue protein sequence, read N- to C-terminus: Homogentisate 1,2-dioxygenase (444 aa).

Catalysis depends on histidine 298, which acts as the Proton acceptor. Fe cation is bound by residues histidine 341 and glutamate 347. Homogentisate is bound by residues tyrosine 356 and histidine 377. Residue histidine 377 coordinates Fe cation.

It belongs to the homogentisate dioxygenase family. In terms of assembly, hexamer; dimer of trimers. Requires Fe cation as cofactor.

It carries out the reaction homogentisate + O2 = 4-maleylacetoacetate + H(+). It functions in the pathway amino-acid degradation; L-phenylalanine degradation; acetoacetate and fumarate from L-phenylalanine: step 4/6. Its function is as follows. Involved in the catabolism of homogentisate (2,5-dihydroxyphenylacetate or 2,5-OH-PhAc), a central intermediate in the degradation of phenylalanine and tyrosine. Catalyzes the oxidative ring cleavage of the aromatic ring of homogentisate to yield maleylacetoacetate. This is Homogentisate 1,2-dioxygenase from Burkholderia orbicola (strain MC0-3).